The chain runs to 96 residues: Large ribosomal subunit protein uL23 (96 aa).

This sequence belongs to the universal ribosomal protein uL23 family. Part of the 50S ribosomal subunit. Contacts protein L29, and trigger factor when it is bound to the ribosome.

In terms of biological role, one of the early assembly proteins it binds 23S rRNA. One of the proteins that surrounds the polypeptide exit tunnel on the outside of the ribosome. Forms the main docking site for trigger factor binding to the ribosome. The polypeptide is Large ribosomal subunit protein uL23 (Onion yellows phytoplasma (strain OY-M)).